Reading from the N-terminus, the 564-residue chain is ATP-dependent RNA helicase DBP3 (564 aa).

The segment at 31–125 is disordered; sequence TKQQTMSKDK…TNYTQSSKLS (95 aa). The segment covering 58-73 has biased composition (basic and acidic residues); it reads ADSKKQRKLEKQEKKD. Basic residues predominate over residues 74 to 96; it reads KKDKKDKKEKKEKKEKKHKKEKK. A compositionally biased stretch (low complexity) spans 112–125; sequence SSSSTNYTQSSKLS. The Q motif motif lies at 155–181; it reads LSFDQVQLTSAITSKLSKFDKPTPIQS. Residues 184 to 356 form the Helicase ATP-binding domain; it reads WPFLLSGKDV…NNFMNSPVKV (173 aa). 197 to 204 serves as a coordination point for ATP; that stretch reads AETGSGKT. The short motif at 303–306 is the DEAD box element; sequence DEAD. A Helicase C-terminal domain is found at 385–534; sequence KLIQLLRKYN…PVPEELLKFG (150 aa).

The protein belongs to the DEAD box helicase family. DDX5/DBP2 subfamily.

It localises to the nucleus. The protein resides in the nucleolus. It carries out the reaction ATP + H2O = ADP + phosphate + H(+). Functionally, ATP-dependent RNA helicase required for 60S ribosomal subunit synthesis. Involved in efficient pre-rRNA processing, predominantly at site A3, which is necessary for the normal formation of 25S and 5.8S rRNAs. In Candida albicans (strain SC5314 / ATCC MYA-2876) (Yeast), this protein is ATP-dependent RNA helicase DBP3 (DBP3).